The sequence spans 115 residues: NTF2-related export protein 1 (115 aa).

One can recognise an NTF2 domain in the interval Tyr7–Leu115.

Its subcellular location is the nucleus. Stimulator of protein export for NES-containing proteins. Also plays a role in mRNA nuclear export. The protein is NTF2-related export protein 1 (nxt1) of Schizosaccharomyces pombe (strain 972 / ATCC 24843) (Fission yeast).